Reading from the N-terminus, the 657-residue chain is Glycogen debranching enzyme (657 aa).

Asp-336 functions as the Nucleophile in the catalytic mechanism. The Proton donor role is filled by Glu-371. The interval 460–479 (ANGEENRDGTNNNYSNNHGK) is disordered.

This sequence belongs to the glycosyl hydrolase 13 family.

The catalysed reaction is Hydrolysis of (1-&gt;6)-alpha-D-glucosidic linkages to branches with degrees of polymerization of three or four glucose residues in limit dextrin.. Its pathway is glycan degradation; glycogen degradation. Its function is as follows. Removes maltotriose and maltotetraose chains that are attached by 1,6-alpha-linkage to the limit dextrin main chain, generating a debranched limit dextrin. The sequence is that of Glycogen debranching enzyme from Escherichia coli (strain SMS-3-5 / SECEC).